Reading from the N-terminus, the 267-residue chain is NAD kinase 2 (267 aa).

The active-site Proton acceptor is the Asp-52. Residues 52 to 53, 124 to 125, Arg-151, Asp-153, 164 to 169, and Ala-188 each bind NAD(+); these read DG, NE, and TAYNKS.

This sequence belongs to the NAD kinase family. It depends on a divalent metal cation as a cofactor.

Its subcellular location is the cytoplasm. It catalyses the reaction NAD(+) + ATP = ADP + NADP(+) + H(+). In terms of biological role, involved in the regulation of the intracellular balance of NAD and NADP, and is a key enzyme in the biosynthesis of NADP. Catalyzes specifically the phosphorylation on 2'-hydroxyl of the adenosine moiety of NAD to yield NADP. This is NAD kinase 2 from Bacillus subtilis (strain 168).